A 462-amino-acid polypeptide reads, in one-letter code: Argininosuccinate lyase (462 aa).

This sequence belongs to the lyase 1 family. Argininosuccinate lyase subfamily.

It is found in the cytoplasm. The enzyme catalyses 2-(N(omega)-L-arginino)succinate = fumarate + L-arginine. It participates in amino-acid biosynthesis; L-arginine biosynthesis; L-arginine from L-ornithine and carbamoyl phosphate: step 3/3. This chain is Argininosuccinate lyase, found in Lachnoclostridium phytofermentans (strain ATCC 700394 / DSM 18823 / ISDg) (Clostridium phytofermentans).